The chain runs to 400 residues: Na(+)/H(+) antiporter NhaA (400 aa).

11 helical membrane passes run Phe9–Val29, Leu60–Leu80, Val96–Phe116, Trp127–Ala147, Ile155–Phe175, Leu180–Leu200, Leu210–Ala230, Tyr263–Leu283, Val294–Ile314, Trp327–Ile347, and Val366–Val386.

The protein belongs to the NhaA Na(+)/H(+) (TC 2.A.33) antiporter family.

The protein resides in the cell inner membrane. It catalyses the reaction Na(+)(in) + 2 H(+)(out) = Na(+)(out) + 2 H(+)(in). Na(+)/H(+) antiporter that extrudes sodium in exchange for external protons. In Campylobacter curvus (strain 525.92), this protein is Na(+)/H(+) antiporter NhaA.